Here is a 340-residue protein sequence, read N- to C-terminus: Cathepsin B (340 aa).

A signal peptide spans 1–17 (MSWSRSILCLLGAFANA). Residues 18–79 (RSIPYYPPLS…ERVDFAEDMD (62 aa)) constitute a propeptide, activation peptide. The N-linked (GlcNAc...) asparagine glycan is linked to Asn-38. 6 disulfides stabilise this stretch: Cys-93–Cys-122, Cys-105–Cys-150, Cys-141–Cys-208, Cys-142–Cys-146, Cys-179–Cys-212, and Cys-187–Cys-198. Cys-108 is an active-site residue. Residue Asn-192 is glycosylated (N-linked (GlcNAc...) asparagine). Active-site residues include His-279 and Asn-299.

This sequence belongs to the peptidase C1 family. In terms of assembly, dimer of a heavy chain and a light chain cross-linked by a disulfide bond.

It localises to the lysosome. It catalyses the reaction Hydrolysis of proteins with broad specificity for peptide bonds. Preferentially cleaves -Arg-Arg-|-Xaa bonds in small molecule substrates (thus differing from cathepsin L). In addition to being an endopeptidase, shows peptidyl-dipeptidase activity, liberating C-terminal dipeptides.. Thiol protease which is believed to participate in intracellular degradation and turnover of proteins. Has also been implicated in tumor invasion and metastasis. This Gallus gallus (Chicken) protein is Cathepsin B (CTSB).